We begin with the raw amino-acid sequence, 469 residues long: 3-isopropylmalate dehydratase large subunit (469 aa).

[4Fe-4S] cluster contacts are provided by C350, C410, and C413.

It belongs to the aconitase/IPM isomerase family. LeuC type 1 subfamily. In terms of assembly, heterodimer of LeuC and LeuD. [4Fe-4S] cluster serves as cofactor.

It carries out the reaction (2R,3S)-3-isopropylmalate = (2S)-2-isopropylmalate. The protein operates within amino-acid biosynthesis; L-leucine biosynthesis; L-leucine from 3-methyl-2-oxobutanoate: step 2/4. In terms of biological role, catalyzes the isomerization between 2-isopropylmalate and 3-isopropylmalate, via the formation of 2-isopropylmaleate. This Rhizobium rhizogenes (strain K84 / ATCC BAA-868) (Agrobacterium radiobacter) protein is 3-isopropylmalate dehydratase large subunit.